The primary structure comprises 338 residues: MQVYYDKDCDLSIIQGKKVAIIGYGSQGHAHACNLKDSGVDVTVGLRTGSSSVAKAEAHGLKVADVATAVAAADVVMILTPDEFQSVLYKEEIEPNIKQGATLAFAHGFAIHYNQVVPRADLDVIMVAPKAPGHTVRSEFVKGGGIPDLIAIFQDASGTAKEVALSYASGVGGGRSGIIETTFKDETETDLFGEQAVLCGGAVELVKMGFETLTEAGYAPEMAYFECLHELKLIVDLMYEGGIANMNYSISNNAEYGEYVTGPKVINEESRKAMRQALKDIQQGEYAKNFILEGQSNYPSMTAWRRNNAAHPIEQVGGKLRAMMPWIESNKIIDKTKN.

Residues M1–T181 form the KARI N-terminal Rossmann domain. Residues Y24–Q27, R47, S50, S52, and D82–Q85 each bind NADP(+). The active site involves H107. G133 lines the NADP(+) pocket. A KARI C-terminal knotted domain is found at T182–I327. Residues D190, E194, E226, and E230 each contribute to the Mg(2+) site. Substrate is bound at residue S251.

Belongs to the ketol-acid reductoisomerase family. It depends on Mg(2+) as a cofactor.

The enzyme catalyses (2R)-2,3-dihydroxy-3-methylbutanoate + NADP(+) = (2S)-2-acetolactate + NADPH + H(+). It catalyses the reaction (2R,3R)-2,3-dihydroxy-3-methylpentanoate + NADP(+) = (S)-2-ethyl-2-hydroxy-3-oxobutanoate + NADPH + H(+). It participates in amino-acid biosynthesis; L-isoleucine biosynthesis; L-isoleucine from 2-oxobutanoate: step 2/4. The protein operates within amino-acid biosynthesis; L-valine biosynthesis; L-valine from pyruvate: step 2/4. In terms of biological role, involved in the biosynthesis of branched-chain amino acids (BCAA). Catalyzes an alkyl-migration followed by a ketol-acid reduction of (S)-2-acetolactate (S2AL) to yield (R)-2,3-dihydroxy-isovalerate. In the isomerase reaction, S2AL is rearranged via a Mg-dependent methyl migration to produce 3-hydroxy-3-methyl-2-ketobutyrate (HMKB). In the reductase reaction, this 2-ketoacid undergoes a metal-dependent reduction by NADPH to yield (R)-2,3-dihydroxy-isovalerate. The chain is Ketol-acid reductoisomerase (NADP(+)) from Saccharophagus degradans (strain 2-40 / ATCC 43961 / DSM 17024).